The following is a 433-amino-acid chain: Serine--tRNA ligase (433 aa).

Position 235–237 (235–237 (TSE)) interacts with L-serine. 266 to 268 (RSE) contributes to the ATP binding site. Residue Glu289 coordinates L-serine. Position 353–356 (353–356 (EISS)) interacts with ATP. L-serine is bound at residue Ser388.

The protein belongs to the class-II aminoacyl-tRNA synthetase family. Type-1 seryl-tRNA synthetase subfamily. Homodimer. The tRNA molecule binds across the dimer.

It localises to the cytoplasm. The catalysed reaction is tRNA(Ser) + L-serine + ATP = L-seryl-tRNA(Ser) + AMP + diphosphate + H(+). The enzyme catalyses tRNA(Sec) + L-serine + ATP = L-seryl-tRNA(Sec) + AMP + diphosphate + H(+). Its pathway is aminoacyl-tRNA biosynthesis; selenocysteinyl-tRNA(Sec) biosynthesis; L-seryl-tRNA(Sec) from L-serine and tRNA(Sec): step 1/1. Its function is as follows. Catalyzes the attachment of serine to tRNA(Ser). Is also able to aminoacylate tRNA(Sec) with serine, to form the misacylated tRNA L-seryl-tRNA(Sec), which will be further converted into selenocysteinyl-tRNA(Sec). The chain is Serine--tRNA ligase from Burkholderia orbicola (strain MC0-3).